Consider the following 146-residue polypeptide: Peptidyl-lysine N-acetyltransferase YiaC (146 aa).

The N-acetyltransferase domain occupies methionine 1–valine 143.

It belongs to the acetyltransferase family.

The catalysed reaction is L-lysyl-[protein] + acetyl-CoA = N(6)-acetyl-L-lysyl-[protein] + CoA + H(+). Functionally, N-epsilon-lysine acetyltransferase that catalyzes acetylation of a large number of proteins. Overexpression inhibits motility. The protein is Peptidyl-lysine N-acetyltransferase YiaC (yiaC) of Escherichia coli (strain K12).